Here is a 629-residue protein sequence, read N- to C-terminus: DNA ligase B (629 aa).

Lys-151 serves as the catalytic N6-AMP-lysine intermediate. The span at 588–597 (LQKQHGTNTR) shows a compositional bias: polar residues. Positions 588–629 (LQKQHGTNTRNEQKGDVRRVDVKQDNGTTWLPEQDSNLRPND) are disordered. Basic and acidic residues predominate over residues 598-611 (NEQKGDVRRVDVKQ). The span at 612–629 (DNGTTWLPEQDSNLRPND) shows a compositional bias: polar residues.

It belongs to the NAD-dependent DNA ligase family. LigB subfamily.

The catalysed reaction is NAD(+) + (deoxyribonucleotide)n-3'-hydroxyl + 5'-phospho-(deoxyribonucleotide)m = (deoxyribonucleotide)n+m + AMP + beta-nicotinamide D-nucleotide.. Catalyzes the formation of phosphodiester linkages between 5'-phosphoryl and 3'-hydroxyl groups in double-stranded DNA using NAD as a coenzyme and as the energy source for the reaction. In Chromohalobacter salexigens (strain ATCC BAA-138 / DSM 3043 / CIP 106854 / NCIMB 13768 / 1H11), this protein is DNA ligase B.